The sequence spans 214 residues: Orotate phosphoribosyltransferase (214 aa).

Lysine 26 contributes to the 5-phospho-alpha-D-ribose 1-diphosphate binding site. Residue 34-35 (FF) coordinates orotate. 5-phospho-alpha-D-ribose 1-diphosphate contacts are provided by residues 72–73 (YK), arginine 99, lysine 100, lysine 103, histidine 105, and 124–132 (DDVITAGTA). 2 residues coordinate orotate: threonine 128 and arginine 156.

This sequence belongs to the purine/pyrimidine phosphoribosyltransferase family. PyrE subfamily. Homodimer. It depends on Mg(2+) as a cofactor.

It carries out the reaction orotidine 5'-phosphate + diphosphate = orotate + 5-phospho-alpha-D-ribose 1-diphosphate. The protein operates within pyrimidine metabolism; UMP biosynthesis via de novo pathway; UMP from orotate: step 1/2. Functionally, catalyzes the transfer of a ribosyl phosphate group from 5-phosphoribose 1-diphosphate to orotate, leading to the formation of orotidine monophosphate (OMP). This chain is Orotate phosphoribosyltransferase, found in Pseudoalteromonas translucida (strain TAC 125).